The following is a 204-amino-acid chain: Cytochrome P450 monooxygenase PC-23 (204 aa).

Heme is bound at residue Cys-138.

This sequence belongs to the cytochrome P450 family. Heme serves as cofactor.

Its pathway is secondary metabolite biosynthesis. Functionally, cytochrome P450 monooxygenase; part of the gene cluster that mediates the biosynthesis of the indole diterpenes penitrems. The geranylgeranyl diphosphate (GGPP) synthase penG catalyzes the first step in penitrem biosynthesis via conversion of farnesyl pyrophosphate and isopentyl pyrophosphate into geranylgeranyl pyrophosphate (GGPP). Condensation of indole-3-glycerol phosphate with GGPP by the prenyl transferase penC then forms 3-geranylgeranylindole (3-GGI). Epoxidation by the FAD-dependent monooxygenase penM leads to a epoxidized-GGI that is substrate of the terpene cyclase penB for cyclization to yield paspaline. Paspaline is subsequently converted to 13-desoxypaxilline by the cytochrome P450 monooxygenase penP, the latter being then converted to paxilline by the cytochrome P450 monooxygenase penQ. Paxilline is converted to beta-paxitriol via C-10 ketoreduction by the short-chain dehydrogenase PC-15 which can be monoprenylated at the C-20 by the indole diterpene prenyltransferase penD. A two-step elimination (acetylation and elimination) process performed by the O-acetyltransferase PC-16 and the P.simplicissimum ptmI-ortholog not yet identified in P.crustosum, leads to the production of the prenylated form of penijanthine. The FAD-linked oxidoreductase ptmO then converts the prenylated form of penijanthine into PC-M5 which is in turn transformed into PC-M4 by the aromatic dimethylallyltransferase PC-22. A series of oxidation steps involving 4 cytochrome P450 monooxygenases (PC-21, PC-05, PC-23, PC-20) and a FAD-dependent monooxygenase (PC-14) are required for the transformation of PC-M4 to penitrems A and E. Synthesis of these final products is proposed to proceed via penitrems D and C (PC-21, PC-05, PC-14) and penitrems B and F (PC-21, PC-05, PC-14, PC-23). In Penicillium crustosum (Blue mold fungus), this protein is Cytochrome P450 monooxygenase PC-23.